The following is a 492-amino-acid chain: MSTGADLKAREGDIPSDNMTQEQSFKKGFCSLRHGLAFILHLCNFSIYTQQMNLSFAITAMVNTTVASSQLNASTERPPTNSQDVWNETLQESKAPVYDWTPEIQGILLSSLSYGSFIAPIPTGYVAGVFGAKYVVGLGLLISSVLTLFIPLAADAGVALLIVLRVIQGMAQVMVLTGQYSLWAKWAPPQERSQLITIAASGSMLGTFLVLIAGGLICQALGWPYIFYIFGGIGCACCLLWFPLVYDDPQNHPFISTGERRYITCSLAQEDCSLGWSLPIKAMVKSLPLWAIVVSYFCEYWLLSTVMAYTPTYISSVLQANLRDSGILSALPFMFGCVCIILGGLLADFLLSRKILRLVTIRKLFTAVGVLASSGILLPLPWVRSSRSTTMAFLVLSSVFASLCDSGALINFLDIAPRYAGFLKGLLQVFSYLAGGIAPTVAGFFISQDSEFGWRNVFFLAAAIDVVGLLFYLIFSRAEVQDWAKEPTFTHL.

Positions 1-20 are disordered; it reads MSTGADLKAREGDIPSDNMT. N-linked (GlcNAc...) asparagine glycans are attached at residues N18, N44, N53, N63, N72, and N87. Transmembrane regions (helical) follow at residues 112–132, 134–154, 156–176, 198–218, 225–245, 287–307, 327–347, 363–383, 393–413, 426–446, and 456–476; these read LSYGSFIAPIPTGYVAGVFGA, YVVGLGLLISSVLTLFIPLAA, AGVALLIVLRVIQGMAQVMVL, IAASGSMLGTFLVLIAGGLIC, YIFYIFGGIGCACCLLWFPLV, LPLWAIVVSYFCEYWLLSTVM, ILSALPFMFGCVCIILGGLLA, KLFTAVGVLASSGILLPLPWV, FLVLSSVFASLCDSGALINFL, LLQVFSYLAGGIAPTVAGFFI, and NVFFLAAAIDVVGLLFYLIFS.

It belongs to the major facilitator superfamily. Sodium/anion cotransporter family. In terms of tissue distribution, expressed in the small intestine (at protein level).

It is found in the apical cell membrane. The enzyme catalyses 3 Na(+)(out) + phosphate(out) = 3 Na(+)(in) + phosphate(in). It carries out the reaction urate(out) + n chloride(in) = urate(in) + n chloride(out). The catalysed reaction is L-thyroxine(out) = L-thyroxine(in). It catalyses the reaction 3,3',5-triiodo-L-thyronine(out) = 3,3',5-triiodo-L-thyronine(in). Its function is as follows. Acts as a membrane potential-dependent organic anion transporter, the transport requires a low concentration of chloride ions. Mediates chloride-dependent transport of urate. Mediates sodium-independent high affinity transport of thyroid hormones including L-thyroxine (T4) and 3,3',5-triiodo-L-thyronine (T3). Can actively transport inorganic phosphate into cells via Na(+) cotransport. In Mus musculus (Mouse), this protein is Probable small intestine urate exporter (Slc17a4).